The sequence spans 156 residues: Small ribosomal subunit protein uS7 (156 aa).

It belongs to the universal ribosomal protein uS7 family. Part of the 30S ribosomal subunit. Contacts proteins S9 and S11.

One of the primary rRNA binding proteins, it binds directly to 16S rRNA where it nucleates assembly of the head domain of the 30S subunit. Is located at the subunit interface close to the decoding center, probably blocks exit of the E-site tRNA. This is Small ribosomal subunit protein uS7 from Prochlorococcus marinus (strain NATL2A).